A 341-amino-acid chain; its full sequence is L-threonine 3-dehydrogenase (341 aa).

Cys38 serves as a coordination point for Zn(2+). Residues Thr40 and His43 each act as charge relay system in the active site. Zn(2+) contacts are provided by His63, Glu64, Cys93, Cys96, Cys99, and Cys107. NAD(+) is bound by residues Ile175, Asp195, Arg200, Leu262–Ile264, and Ile286–Tyr287.

Belongs to the zinc-containing alcohol dehydrogenase family. In terms of assembly, homotetramer. Zn(2+) is required as a cofactor.

Its subcellular location is the cytoplasm. It catalyses the reaction L-threonine + NAD(+) = (2S)-2-amino-3-oxobutanoate + NADH + H(+). It participates in amino-acid degradation; L-threonine degradation via oxydo-reductase pathway; glycine from L-threonine: step 1/2. In terms of biological role, catalyzes the NAD(+)-dependent oxidation of L-threonine to 2-amino-3-ketobutyrate. This is L-threonine 3-dehydrogenase from Shewanella sp. (strain ANA-3).